We begin with the raw amino-acid sequence, 204 residues long: Inositol diphosphatase DSP5 (204 aa).

The Tyrosine-protein phosphatase domain occupies 19 to 168 (NFSMVEDEIY…FDVLRLKQCL (150 aa)). The WPD loop important for active site topology stretch occupies residues 75–87 (FGIEGKTDPPTPM). Catalysis depends on Cys111, which acts as the Phosphocysteine intermediate.

Belongs to the protein-tyrosine phosphatase family. Atypical dual-specificity phosphatase Siw14-like subfamily. Highly expressed in flowers. Expressed at low levels in roots, leaves, stems and siliques.

The enzyme catalyses 5-diphospho-1D-myo-inositol 1,2,3,4,6-pentakisphosphate + H2O = 1D-myo-inositol hexakisphosphate + phosphate + H(+). It catalyses the reaction 1,5-bis(diphospho)-1D-myo-inositol 2,3,4,6-tetrakisphosphate + H2O = 1-diphospho-1D-myo-inositol 2,3,4,5,6-pentakisphosphate + phosphate + 2 H(+). It carries out the reaction 3,5-bis(diphospho)-1D-myo-inositol 1,2,4,6-tetrakisphosphate + H2O = 3-diphospho-1D-myo-inositol 1,2,4,5,6-pentakisphosphate + phosphate + 2 H(+). The catalysed reaction is 6-diphospho-1D-myo-inositol pentakisphosphate + H2O = 1D-myo-inositol hexakisphosphate + phosphate + H(+). Cleaves the beta-phosphate at the 5-position of soluble inositol pyrophosphates. Has highest activity on 5-diphosphoinositol 1,2,3,4,6-pentakisphosphate (5-InsP(7)). Possesses low phosphotyrosine phosphatase activity in vitro. Dephosphorylates the phosphoinositides PI(3,5)P2. Hydrolyzes O-methylfluorescein phosphate in vitro. The polypeptide is Inositol diphosphatase DSP5 (Arabidopsis thaliana (Mouse-ear cress)).